The following is a 388-amino-acid chain: GTPase Obg (388 aa).

One can recognise an Obg domain in the interval 1 to 159 (MKFVDEAVIK…RELRLELLLL (159 aa)). One can recognise an OBG-type G domain in the interval 160-333 (ADVGMLGLPN…LCYKLADFME (174 aa)). Residues 166-173 (GLPNAGKS), 191-195 (FTTLI), 213-216 (DIPG), 283-286 (NKVD), and 314-316 (SAV) contribute to the GTP site. The Mg(2+) site is built by S173 and T193. Positions 359-380 (NQGEVITEDDDDWDDWDDEEDD) are disordered. A compositionally biased stretch (acidic residues) spans 364-380 (ITEDDDDWDDWDDEEDD).

It belongs to the TRAFAC class OBG-HflX-like GTPase superfamily. OBG GTPase family. In terms of assembly, monomer. Mg(2+) serves as cofactor.

The protein localises to the cytoplasm. Functionally, an essential GTPase which binds GTP, GDP and possibly (p)ppGpp with moderate affinity, with high nucleotide exchange rates and a fairly low GTP hydrolysis rate. Plays a role in control of the cell cycle, stress response, ribosome biogenesis and in those bacteria that undergo differentiation, in morphogenesis control. The sequence is that of GTPase Obg from Vibrio vulnificus (strain YJ016).